The following is a 100-amino-acid chain: DNA base-flipping protein (100 aa).

The protein belongs to the MGMT family. ATL subfamily.

Its function is as follows. Involved in DNA damage recognition. Binds DNA containing O(6)-methylguanine. Binds to the damaged base and flips the base out of the DNA duplex into an extrahelical conformation, which allows processing by repair proteins. This chain is DNA base-flipping protein, found in Vibrio parahaemolyticus serotype O3:K6 (strain AQ3810).